The chain runs to 180 residues: uncharacterized protein (180 aa).

This sequence to H.influenzae HI_0656.1.

This is an uncharacterized protein from Escherichia coli (strain K12).